A 355-amino-acid chain; its full sequence is Protein RecA (355 aa).

Gly78–Thr85 provides a ligand contact to ATP.

The protein belongs to the RecA family.

It localises to the cytoplasm. Functionally, can catalyze the hydrolysis of ATP in the presence of single-stranded DNA, the ATP-dependent uptake of single-stranded DNA by duplex DNA, and the ATP-dependent hybridization of homologous single-stranded DNAs. It interacts with LexA causing its activation and leading to its autocatalytic cleavage. The sequence is that of Protein RecA from Rhodobacter capsulatus (Rhodopseudomonas capsulata).